Consider the following 120-residue polypeptide: NAD(P)H-quinone oxidoreductase subunit 3, chloroplastic (120 aa).

Helical transmembrane passes span 9 to 29, 64 to 84, and 88 to 108; these read IFWA…LISG, MFAL…PWAM, and VLGV…IVGS.

The protein belongs to the complex I subunit 3 family. NDH is composed of at least 16 different subunits, 5 of which are encoded in the nucleus.

The protein localises to the plastid. It localises to the chloroplast thylakoid membrane. The catalysed reaction is a plastoquinone + NADH + (n+1) H(+)(in) = a plastoquinol + NAD(+) + n H(+)(out). It catalyses the reaction a plastoquinone + NADPH + (n+1) H(+)(in) = a plastoquinol + NADP(+) + n H(+)(out). In terms of biological role, NDH shuttles electrons from NAD(P)H:plastoquinone, via FMN and iron-sulfur (Fe-S) centers, to quinones in the photosynthetic chain and possibly in a chloroplast respiratory chain. The immediate electron acceptor for the enzyme in this species is believed to be plastoquinone. Couples the redox reaction to proton translocation, and thus conserves the redox energy in a proton gradient. The chain is NAD(P)H-quinone oxidoreductase subunit 3, chloroplastic from Gossypium barbadense (Sea Island cotton).